Reading from the N-terminus, the 728-residue chain is Phosphoribosylformylglycinamidine synthase subunit PurL (728 aa).

H42 is an active-site residue. Residues Y45 and K84 each coordinate ATP. Residue E86 coordinates Mg(2+). Substrate is bound by residues 87-90 (SHNH) and R109. The Proton acceptor role is filled by H88. Mg(2+) is bound at residue D110. Q237 lines the substrate pocket. D265 lines the Mg(2+) pocket. Position 309 to 311 (309 to 311 (ESQ)) interacts with substrate. Positions 491 and 528 each coordinate ATP. Position 529 (N529) interacts with Mg(2+). S531 provides a ligand contact to substrate.

Belongs to the FGAMS family. In terms of assembly, monomer. Part of the FGAM synthase complex composed of 1 PurL, 1 PurQ and 2 PurS subunits.

The protein resides in the cytoplasm. The enzyme catalyses N(2)-formyl-N(1)-(5-phospho-beta-D-ribosyl)glycinamide + L-glutamine + ATP + H2O = 2-formamido-N(1)-(5-O-phospho-beta-D-ribosyl)acetamidine + L-glutamate + ADP + phosphate + H(+). It functions in the pathway purine metabolism; IMP biosynthesis via de novo pathway; 5-amino-1-(5-phospho-D-ribosyl)imidazole from N(2)-formyl-N(1)-(5-phospho-D-ribosyl)glycinamide: step 1/2. Its function is as follows. Part of the phosphoribosylformylglycinamidine synthase complex involved in the purines biosynthetic pathway. Catalyzes the ATP-dependent conversion of formylglycinamide ribonucleotide (FGAR) and glutamine to yield formylglycinamidine ribonucleotide (FGAM) and glutamate. The FGAM synthase complex is composed of three subunits. PurQ produces an ammonia molecule by converting glutamine to glutamate. PurL transfers the ammonia molecule to FGAR to form FGAM in an ATP-dependent manner. PurS interacts with PurQ and PurL and is thought to assist in the transfer of the ammonia molecule from PurQ to PurL. This Campylobacter jejuni subsp. doylei (strain ATCC BAA-1458 / RM4099 / 269.97) protein is Phosphoribosylformylglycinamidine synthase subunit PurL.